We begin with the raw amino-acid sequence, 233 residues long: MGQKIDPRGFRLAVTRNWSSKWFANSQNFPGMLKEDIDVREFLKAKLKNASVSRITIERPAKSARITIHTARPGVVIGKKGEDIEVLKQELQKRMGVPVHVNIEEVRKPEIDAQIIADGIASQLEKRVMFRRAMKRAMQNAMRLGALGIKIMSSGRLNGIEIARTEWYREGRVPLHTLRADVDYATSEAHTTYGVIGIKVWVYKGDMKPGQVSAEPTQPEKKMRKGGRNAAAN.

One can recognise a KH type-2 domain in the interval 39-107 (VREFLKAKLK…PVHVNIEEVR (69 aa)). Residues 209 to 233 (PGQVSAEPTQPEKKMRKGGRNAAAN) form a disordered region.

This sequence belongs to the universal ribosomal protein uS3 family. Part of the 30S ribosomal subunit. Forms a tight complex with proteins S10 and S14.

Its function is as follows. Binds the lower part of the 30S subunit head. Binds mRNA in the 70S ribosome, positioning it for translation. The polypeptide is Small ribosomal subunit protein uS3 (Laribacter hongkongensis (strain HLHK9)).